Here is a 455-residue protein sequence, read N- to C-terminus: Bifunctional protein GlmU (455 aa).

The segment at 1–227 (MGLSVIILAA…CEEVQGVNDR (227 aa)) is pyrophosphorylase. UDP-N-acetyl-alpha-D-glucosamine contacts are provided by residues 8–11 (LAAG), Lys-22, Gln-73, 78–79 (GT), 100–102 (YGD), Gly-137, Glu-152, Asn-167, and Asn-225. Asp-102 is a Mg(2+) binding site. Asn-225 lines the Mg(2+) pocket. Positions 228–248 (WELTKLERYYQRLMAKKLSLA) are linker. An N-acetyltransferase region spans residues 249–455 (GVTIIDPERF…KGWHRPTKKE (207 aa)). The UDP-N-acetyl-alpha-D-glucosamine site is built by Arg-332 and Lys-350. His-362 functions as the Proton acceptor in the catalytic mechanism. UDP-N-acetyl-alpha-D-glucosamine contacts are provided by Tyr-365 and Asn-376. Residues Ala-379, 385-386 (NY), Ser-404, Ala-422, and Arg-439 each bind acetyl-CoA.

The protein in the N-terminal section; belongs to the N-acetylglucosamine-1-phosphate uridyltransferase family. It in the C-terminal section; belongs to the transferase hexapeptide repeat family. In terms of assembly, homotrimer. Mg(2+) serves as cofactor.

Its subcellular location is the cytoplasm. The enzyme catalyses alpha-D-glucosamine 1-phosphate + acetyl-CoA = N-acetyl-alpha-D-glucosamine 1-phosphate + CoA + H(+). The catalysed reaction is N-acetyl-alpha-D-glucosamine 1-phosphate + UTP + H(+) = UDP-N-acetyl-alpha-D-glucosamine + diphosphate. The protein operates within nucleotide-sugar biosynthesis; UDP-N-acetyl-alpha-D-glucosamine biosynthesis; N-acetyl-alpha-D-glucosamine 1-phosphate from alpha-D-glucosamine 6-phosphate (route II): step 2/2. It functions in the pathway nucleotide-sugar biosynthesis; UDP-N-acetyl-alpha-D-glucosamine biosynthesis; UDP-N-acetyl-alpha-D-glucosamine from N-acetyl-alpha-D-glucosamine 1-phosphate: step 1/1. It participates in bacterial outer membrane biogenesis; LPS lipid A biosynthesis. Its function is as follows. Catalyzes the last two sequential reactions in the de novo biosynthetic pathway for UDP-N-acetylglucosamine (UDP-GlcNAc). The C-terminal domain catalyzes the transfer of acetyl group from acetyl coenzyme A to glucosamine-1-phosphate (GlcN-1-P) to produce N-acetylglucosamine-1-phosphate (GlcNAc-1-P), which is converted into UDP-GlcNAc by the transfer of uridine 5-monophosphate (from uridine 5-triphosphate), a reaction catalyzed by the N-terminal domain. This Coxiella burnetii (strain RSA 493 / Nine Mile phase I) protein is Bifunctional protein GlmU.